Reading from the N-terminus, the 174-residue chain is Cytoglobin-1 (174 aa).

The region spanning 15–165 is the Globin domain; the sequence is SLTEEDVCVI…LYWQMNRVYA (151 aa). Positions 78 and 110 each coordinate heme b.

Belongs to the globin family. In terms of assembly, monomeric. In terms of tissue distribution, expressed in all tissues examined with highest levels in brain, eye, gut and heart.

Its subcellular location is the cytoplasm. The protein resides in the nucleus. The catalysed reaction is Fe(II)-heme b-[protein] + nitric oxide + O2 = Fe(III)-heme b-[protein] + nitrate. It catalyses the reaction Fe(III)-heme b-[protein] + nitric oxide + H2O = Fe(II)-heme b-[protein] + nitrite + 2 H(+). It carries out the reaction 2 superoxide + 2 H(+) = H2O2 + O2. The enzyme catalyses H2O2 + AH2 = A + 2 H2O. Probable multifunctional globin with a hexacoordinated heme iron required for the catalysis of various reactions depending on redox condition of the cell as well as oxygen availability. Has a nitric oxide dioxygenase (NOD) activity and is most probably involved in cell-mediated and oxygen-dependent nitric oxide consumption. Under normoxic conditions functions as a nitric oxide dioxygenase (NOD) but under hypoxic conditions the globin may switch its function to that of a nitrite (NO2) reductase (NiR), generating nitric oxide. Could also have peroxidase and superoxide dismutase activities, detoxifying reactive oxygen species and protecting cells against oxidative stress. Also binds dioxygen with low affinity and could function as an oxygen sensor but has probably no function as a respiratory oxygen carrier. This chain is Cytoglobin-1 (cygb1), found in Danio rerio (Zebrafish).